Here is a 158-residue protein sequence, read N- to C-terminus: NAD(P)H-quinone oxidoreductase subunit J, chloroplastic (158 aa).

This sequence belongs to the complex I 30 kDa subunit family. In terms of assembly, NDH is composed of at least 16 different subunits, 5 of which are encoded in the nucleus.

It is found in the plastid. It localises to the chloroplast thylakoid membrane. The catalysed reaction is a plastoquinone + NADH + (n+1) H(+)(in) = a plastoquinol + NAD(+) + n H(+)(out). It carries out the reaction a plastoquinone + NADPH + (n+1) H(+)(in) = a plastoquinol + NADP(+) + n H(+)(out). Functionally, NDH shuttles electrons from NAD(P)H:plastoquinone, via FMN and iron-sulfur (Fe-S) centers, to quinones in the photosynthetic chain and possibly in a chloroplast respiratory chain. The immediate electron acceptor for the enzyme in this species is believed to be plastoquinone. Couples the redox reaction to proton translocation, and thus conserves the redox energy in a proton gradient. This chain is NAD(P)H-quinone oxidoreductase subunit J, chloroplastic, found in Solanum lycopersicum (Tomato).